The sequence spans 473 residues: Glutamate--tRNA ligase (473 aa).

A 'HIGH' region motif is present at residues 11–21; sequence PSPTGFLHIGG. The 'KMSKS' region motif lies at 240–244; that stretch reads KLSKR. Position 243 (Lys243) interacts with ATP.

Belongs to the class-I aminoacyl-tRNA synthetase family. Glutamate--tRNA ligase type 1 subfamily. As to quaternary structure, monomer.

The protein localises to the cytoplasm. It carries out the reaction tRNA(Glu) + L-glutamate + ATP = L-glutamyl-tRNA(Glu) + AMP + diphosphate. Functionally, catalyzes the attachment of glutamate to tRNA(Glu) in a two-step reaction: glutamate is first activated by ATP to form Glu-AMP and then transferred to the acceptor end of tRNA(Glu). The sequence is that of Glutamate--tRNA ligase from Rhodopseudomonas palustris (strain TIE-1).